The sequence spans 132 residues: Probable histone H2A.1 (132 aa).

Residues 1-22 form a disordered region; sequence MAGRGKTLGSGSAKKATTRSSK.

It belongs to the histone H2A family. The nucleosome is a histone octamer containing two molecules each of H2A, H2B, H3 and H4 assembled in one H3-H4 heterotetramer and two H2A-H2B heterodimers. The octamer wraps approximately 147 bp of DNA. In terms of processing, not ubiquitinated. Low level of expression; mainly in roots. Found in the root cap cells and in non dividing tissues of the plant, including the root elongation and maturation zones and the leaf veins.

The protein localises to the nucleus. It localises to the chromosome. In terms of biological role, core component of nucleosome. Nucleosomes wrap and compact DNA into chromatin, limiting DNA accessibility to the cellular machineries which require DNA as a template. Histones thereby play a central role in transcription regulation, DNA repair, DNA replication and chromosomal stability. DNA accessibility is regulated via a complex set of post-translational modifications of histones, also called histone code, and nucleosome remodeling. The chain is Probable histone H2A.1 from Arabidopsis thaliana (Mouse-ear cress).